The primary structure comprises 114 residues: UPF0342 protein SH1117 (114 aa).

The protein belongs to the UPF0342 family.

The sequence is that of UPF0342 protein SH1117 from Staphylococcus haemolyticus (strain JCSC1435).